Reading from the N-terminus, the 426-residue chain is MSRIKRVHGREVLDSRGNPTVEVEVELESGALGRAIVPSGASTGEREALELRDGDPKRYLGKGVLKAVDNVNGVIAKALVGLEPYNQREIDQILIELDGTENKSKLGANAILGTSMAVARAAANELGIPLYEYLGGKFGYRLPVPLMNVINGGAHADNNLDIQEFMIVPVCGGAFREALRAGVETFHHLKKILKEKGYSTNVGDEGGFAPNLNSSEEALDILMQAIEKAGYKPGEDILLALDVASSEFYENGVYKFEGKERSAEEMIEFYEKLIQKYPIISIEDPMSENDWEGWKEITKRLGDKVQLVGDDLFTTNPKILRKGIEEGVANAILVKLNQIGTVSETLDTVMLAKERNYSAIISHRSGETEDTFISHLAVATNAGQIKTGSASRTDRIAKYNELLRIEERLGNGAVFWGREEFYRFTS.

Gln163 serves as a coordination point for (2R)-2-phosphoglycerate. Residue Glu205 is the Proton donor of the active site. Positions 242, 283, and 310 each coordinate Mg(2+). 4 residues coordinate (2R)-2-phosphoglycerate: Lys335, Arg364, Ser365, and Lys386. The active-site Proton acceptor is Lys335.

This sequence belongs to the enolase family. The cofactor is Mg(2+).

It is found in the cytoplasm. It localises to the secreted. Its subcellular location is the cell surface. The catalysed reaction is (2R)-2-phosphoglycerate = phosphoenolpyruvate + H2O. It participates in carbohydrate degradation; glycolysis; pyruvate from D-glyceraldehyde 3-phosphate: step 4/5. Functionally, catalyzes the reversible conversion of 2-phosphoglycerate (2-PG) into phosphoenolpyruvate (PEP). It is essential for the degradation of carbohydrates via glycolysis. The polypeptide is Enolase (Aquifex aeolicus (strain VF5)).